Consider the following 2944-residue polypeptide: Collagen alpha-1(VII) chain (2944 aa).

A signal peptide spans 1-16; it reads MTLRLLVAALCAGILA. Residues 17-1253 are nonhelical region (NC1); the sequence is EAPRVRAQHR…PEPCPVYCPK (1237 aa). The 174-residue stretch at 38–211 folds into the VWFA 1 domain; the sequence is DIVFLLDGSS…SILRTLLPLV (174 aa). Fibronectin type-III domains follow at residues 234 to 329, 330 to 416, 417 to 507, 510 to 597, 600 to 687, 688 to 775, 778 to 866, 869 to 957, and 958 to 1051; these read APRD…TALE, GPEL…TDAS, VEQT…PELP, PVTD…EPET, AVPG…DPLG, PVRT…APEP, RVSR…PPEA, ALGT…SPRV, and PSIE…CPRG. A glycan (N-linked (GlcNAc...) asparagine) is linked at Asn-337. Residues 632–651 form a disordered region; it reads STGSGPESSQTLPPDSTATD. The N-linked (GlcNAc...) asparagine glycan is linked to Asn-786. The 176-residue stretch at 1054–1229 folds into the VWFA 2 domain; the sequence is DVVFLPHATQ…PSLDQAVSGL (176 aa). N-linked (GlcNAc...) asparagine glycosylation is present at Asn-1109. 2 short sequence motifs (cell attachment site) span residues 1170 to 1172 and 1334 to 1336; these read RGD. Disordered regions lie at residues 1239–1941, 1963–2782, and 2837–2872; these read TTQP…SVPN, WDES…EKGE, and SHAE…PWDS. An interrupted collagenous region region spans residues 1254-1477; the sequence is GQKGEPGEMG…GPRGPPGAIG (224 aa). The segment at 1254 to 2784 is triple-helical region; that stretch reads GQKGEPGEMG…GPRGEKGEAA (1531 aa). Positions 1336–1346 are enriched in basic and acidic residues; that stretch reads DPGERGPRGPK. Over residues 1355 to 1365 the composition is skewed to gly residues; that stretch reads VIGGEGPGLPG. Residues 1399 to 1408 are compositionally biased toward basic and acidic residues; it reads KGDKGDRGER. Residues 1429–1440 are compositionally biased toward pro residues; sequence PGSPGPQGPVGP. A compositionally biased stretch (low complexity) spans 1574–1583; the sequence is RGPPGLVLPG. Basic and acidic residues-rich tracts occupy residues 1630–1642, 1669–1683, and 1715–1733; these read RGRD…KGDE, VGEK…EDGR, and AREK…RGPK. Residues 1786-1802 show a composition bias toward low complexity; that stretch reads KPGAAGPSGPNGAAGKA. The segment covering 1852-1877 has biased composition (basic and acidic residues); sequence EDGRKGEKGDSGASGREGRDGPKGER. Positions 1886–1897 are enriched in pro residues; that stretch reads QGPPGLPGPVGP. Residues 1898 to 1911 show a composition bias toward gly residues; the sequence is PGQGFPGVPGGTGP. Residues 1974-1984 show a composition bias toward basic and acidic residues; sequence PERRRGPKGDS. The short motif at 2008 to 2010 is the Cell attachment site element; the sequence is RGD. Residues Pro-2036 and Pro-2039 each carry the 4-hydroxyproline modification. The span at 2046–2055 shows a compositional bias: gly residues; the sequence is GRAGGVGEAG. Over residues 2056 to 2074 the composition is skewed to basic and acidic residues; it reads RPGERGERGEKGERGEQGR. Positions 2078–2092 are enriched in pro residues; sequence PGLPGTPGPPGPPGP. A 4-hydroxyproline mark is found at Pro-2084, Pro-2087, and Pro-2090. Positions 2127–2143 are enriched in basic and acidic residues; sequence PKGDRGVPGIKGDRGEP. A 4-hydroxyproline mark is found at Pro-2167, Pro-2176, Pro-2185, and Pro-2188. 2 stretches are compositionally biased toward low complexity: residues 2191 to 2206 and 2235 to 2250; these read PGLA…SGLK and SGLV…PGQV. Over residues 2328–2346 the composition is skewed to basic and acidic residues; the sequence is AKGDRGLPGPRGEKGEAGR. Low complexity predominate over residues 2387 to 2406; sequence VKGDLGLPGLPGAPGVVGFP. Residues 2438 to 2448 show a composition bias toward pro residues; it reads PLGPPGPPGSV. 2 stretches are compositionally biased toward basic and acidic residues: residues 2471 to 2486 and 2534 to 2570; these read RGER…DGRP and AKGD…EPGD. A Cell attachment site motif is present at residues 2553-2555; sequence RGD. A compositionally biased stretch (low complexity) spans 2573–2601; it reads SAGLPGLRGLLGPQGQPGAAGIPGDPGSP. Lys-2625 and Lys-2631 each carry 5-hydroxylysine; alternate. O-linked (Gal...) hydroxylysine; alternate glycans are attached at residues Lys-2625 and Lys-2631. 4-hydroxyproline occurs at positions 2664, 2667, and 2673. Residues 2704–2713 are compositionally biased toward gly residues; sequence GTPGIGGFPG. A compositionally biased stretch (low complexity) spans 2749 to 2762; the sequence is GERVVGAPGVPGAP. Positions 2785–2944 are nonhelical region (NC2); sequence LTEDDIRGFV…QSQGTGTAQD (160 aa). Positions 2837–2847 are enriched in basic and acidic residues; it reads SHAEEEERVPP. A compositionally biased stretch (acidic residues) spans 2848-2872; that stretch reads EDDEYSEYSEYSVEEYQDPEAPWDS. One can recognise a BPTI/Kunitz inhibitor domain in the interval 2872 to 2944; it reads SDDPCSLPLD…QSQGTGTAQD (73 aa). 3 disulfide bridges follow: Cys-2876–Cys-2929, Cys-2885–Cys-2912, and Cys-2904–Cys-2925.

Homotrimer. Interacts with MIA3/TANGO1; facilitating its loading into transport carriers and subsequent secretion. Post-translationally, prolines at the third position of the tripeptide repeating unit (G-X-Y) are hydroxylated in some or all of the chains.

Its subcellular location is the secreted. The protein resides in the extracellular space. It localises to the extracellular matrix. It is found in the basement membrane. Stratified squamous epithelial basement membrane protein that forms anchoring fibrils which may contribute to epithelial basement membrane organization and adherence by interacting with extracellular matrix (ECM) proteins such as type IV collagen. This is Collagen alpha-1(VII) chain (COL7A1) from Homo sapiens (Human).